The following is a 211-amino-acid chain: Uracil phosphoribosyltransferase (211 aa).

5-phospho-alpha-D-ribose 1-diphosphate-binding positions include arginine 78, arginine 103, and 130-138 (DPMLATGGT). Residues isoleucine 195 and 200 to 202 (GDA) contribute to the uracil site. Aspartate 201 is a 5-phospho-alpha-D-ribose 1-diphosphate binding site.

It belongs to the UPRTase family. Mg(2+) is required as a cofactor.

It catalyses the reaction UMP + diphosphate = 5-phospho-alpha-D-ribose 1-diphosphate + uracil. Its pathway is pyrimidine metabolism; UMP biosynthesis via salvage pathway; UMP from uracil: step 1/1. Allosterically activated by GTP. Functionally, catalyzes the conversion of uracil and 5-phospho-alpha-D-ribose 1-diphosphate (PRPP) to UMP and diphosphate. This chain is Uracil phosphoribosyltransferase, found in Arthrobacter sp. (strain FB24).